A 251-amino-acid chain; its full sequence is tRNA (guanine-N(1)-)-methyltransferase (251 aa).

S-adenosyl-L-methionine-binding positions include glycine 111 and 131-136 (LGDFVL).

It belongs to the RNA methyltransferase TrmD family. Homodimer.

It is found in the cytoplasm. It carries out the reaction guanosine(37) in tRNA + S-adenosyl-L-methionine = N(1)-methylguanosine(37) in tRNA + S-adenosyl-L-homocysteine + H(+). Functionally, specifically methylates guanosine-37 in various tRNAs. The protein is tRNA (guanine-N(1)-)-methyltransferase of Synechococcus sp. (strain JA-2-3B'a(2-13)) (Cyanobacteria bacterium Yellowstone B-Prime).